Reading from the N-terminus, the 110-residue chain is Large ribosomal subunit protein P2 (110 aa).

S59 is modified (O-(pantetheine 4'-phosphoryl)serine; in acyl carrier protein form). Residues 62-110 form a disordered region; the sequence is LASVPSGGAAPAAAAGGAAAGGAAEEKAEDKPAEKDEESDDDMGFGLFD. Low complexity predominate over residues 63-84; sequence ASVPSGGAAPAAAAGGAAAGGA. The span at 85–95 shows a compositional bias: basic and acidic residues; it reads AEEKAEDKPAE. S100 is modified (phosphoserine; in ribosomal stalk form).

It belongs to the eukaryotic ribosomal protein P1/P2 family. As to quaternary structure, the phosphorylated form is part of the ribosomal stalk involved in the interaction of the elongation factors with the ribosome during protein synthesis. The phosphopantetheinylated form is part of the 10S triacylglycerol biosynthetic complex involved in de novo fatty acid biosynthesis. In terms of processing, 4'-phosphopantetheine is transferred from CoA to a specific serine by acpS. This modification is essential for activity because fatty acids are bound in thioester linkage to the sulfhydryl of the prosthetic group.

It localises to the cytoplasm. Probable bifunctional protein. The phosphorylated protein plays an important role in the elongation step of protein synthesis. The phosphopantetheinylated protein acts as an acyl carrier protein. The sequence is that of Large ribosomal subunit protein P2 from Rhodotorula glutinis (Yeast).